The following is a 291-amino-acid chain: Elongation factor Ts (291 aa).

Residues 79–82 are involved in Mg(2+) ion dislocation from EF-Tu; it reads TDFV.

Belongs to the EF-Ts family.

Its subcellular location is the cytoplasm. Associates with the EF-Tu.GDP complex and induces the exchange of GDP to GTP. It remains bound to the aminoacyl-tRNA.EF-Tu.GTP complex up to the GTP hydrolysis stage on the ribosome. This is Elongation factor Ts from Jannaschia sp. (strain CCS1).